Here is a 102-residue protein sequence, read N- to C-terminus: Ribonuclease P protein component 1 (102 aa).

The protein belongs to the eukaryotic/archaeal RNase P protein component 1 family. Consists of a catalytic RNA component and at least 4-5 protein subunits.

The protein resides in the cytoplasm. The enzyme catalyses Endonucleolytic cleavage of RNA, removing 5'-extranucleotides from tRNA precursor.. Functionally, part of ribonuclease P, a protein complex that generates mature tRNA molecules by cleaving their 5'-ends. The sequence is that of Ribonuclease P protein component 1 from Archaeoglobus fulgidus (strain ATCC 49558 / DSM 4304 / JCM 9628 / NBRC 100126 / VC-16).